The sequence spans 89 residues: Small ribosomal subunit protein uS17 (89 aa).

Belongs to the universal ribosomal protein uS17 family. Part of the 30S ribosomal subunit.

In terms of biological role, one of the primary rRNA binding proteins, it binds specifically to the 5'-end of 16S ribosomal RNA. The protein is Small ribosomal subunit protein uS17 of Variovorax paradoxus (strain S110).